We begin with the raw amino-acid sequence, 366 residues long: Alanine racemase (366 aa).

The active-site Proton acceptor; specific for D-alanine is K40. K40 carries the post-translational modification N6-(pyridoxal phosphate)lysine. A substrate-binding site is contributed by R136. Catalysis depends on Y263, which acts as the Proton acceptor; specific for L-alanine. A substrate-binding site is contributed by M310.

This sequence belongs to the alanine racemase family. It depends on pyridoxal 5'-phosphate as a cofactor.

It carries out the reaction L-alanine = D-alanine. It functions in the pathway amino-acid biosynthesis; D-alanine biosynthesis; D-alanine from L-alanine: step 1/1. Its function is as follows. Catalyzes the interconversion of L-alanine and D-alanine. May also act on other amino acids. The sequence is that of Alanine racemase (alr) from Streptococcus pyogenes serotype M6 (strain ATCC BAA-946 / MGAS10394).